The chain runs to 91 residues: Putative regulatory protein Moth_0891 (91 aa).

It belongs to the RemA family.

The polypeptide is Putative regulatory protein Moth_0891 (Moorella thermoacetica (strain ATCC 39073 / JCM 9320)).